The primary structure comprises 20 residues: Unknown protein NF007 from 2D-PAGE (20 aa).

In Naegleria fowleri (Brain eating amoeba), this protein is Unknown protein NF007 from 2D-PAGE.